Here is a 526-residue protein sequence, read N- to C-terminus: Peptide chain release factor 3 (526 aa).

One can recognise a tr-type G domain in the interval 9-277 (DRRRTFAIVS…TFVDHAPAPL (269 aa)). Residues 18 to 25 (SHPDAGKT), 86 to 90 (DTPGH), and 140 to 143 (NKLD) each bind GTP.

The protein belongs to the TRAFAC class translation factor GTPase superfamily. Classic translation factor GTPase family. PrfC subfamily.

It is found in the cytoplasm. Its function is as follows. Increases the formation of ribosomal termination complexes and stimulates activities of RF-1 and RF-2. It binds guanine nucleotides and has strong preference for UGA stop codons. It may interact directly with the ribosome. The stimulation of RF-1 and RF-2 is significantly reduced by GTP and GDP, but not by GMP. The chain is Peptide chain release factor 3 from Geobacter sulfurreducens (strain ATCC 51573 / DSM 12127 / PCA).